Here is a 742-residue protein sequence, read N- to C-terminus: Collectin-12 (742 aa).

Residues Met1 to Lys37 lie on the Cytoplasmic side of the membrane. The helical; Signal-anchor for type II membrane protein transmembrane segment at Phe38–Gly58 threads the bilayer. Over Tyr59–Leu742 the chain is Extracellular. Residues Thr104–Asn142 are a coiled coil. 3 N-linked (GlcNAc...) asparagine glycosylation sites follow: Asn159, Asn168, and Asn271. A coiled-coil region spans residues Ile220–Thr301. The segment at Thr439–Pro608 is disordered. Collagen-like domains lie at Gly452–Arg511 and Gly527–Ser586. The span at Ser501 to Pro514 shows a compositional bias: low complexity. Residues Lys516–Pro532 show a composition bias toward pro residues. A compositionally biased stretch (low complexity) spans Lys534 to Pro556. Residues Pro571–Pro585 are compositionally biased toward pro residues. Intrachain disulfides connect Cys607-Cys618, Cys635-Cys730, and Cys708-Cys722. The region spanning Phe614–Glu731 is the C-type lectin domain. Ca(2+) contacts are provided by Phe644, Asn646, Glu650, Asp670, and Glu674. A carbohydrate contacts are provided by Lys691, Gln694, and Asp696. Ca(2+)-binding residues include Gln694, Asp696, Asn697, Glu706, Asp707, Asn718, Asp719, and Glu731. Glu706 serves as a coordination point for a carbohydrate. Residues Asn718 and Asp719 each contribute to the a carbohydrate site.

As to quaternary structure, the extracellular domain forms a stable trimer. The extracellular domain interacts with fibrillar amyloid-beta peptide. As to expression, highly expressed in lung, spleen, small and large intestine, stomach and brain. Expressed in neonatal microglia.

It localises to the membrane. Functionally, scavenger receptor that displays several functions associated with host defense. Promotes binding and phagocytosis of Gram-positive, Gram-negative bacteria and yeast. Mediates the recognition, internalization and degradation of oxidatively modified low density lipoprotein (oxLDL) by vascular endothelial cells. Binds to several carbohydrates including Gal-type ligands, D-galactose, L- and D-fucose, GalNAc, T and Tn antigens in a calcium-dependent manner and internalizes specifically GalNAc in nurse-like cells. Also binds to sialyl Lewis X or a trisaccharide and asialo-orosomucoid (ASOR). The sequence is that of Collectin-12 (Colec12) from Rattus norvegicus (Rat).